Here is a 96-residue protein sequence, read N- to C-terminus: Co-chaperonin GroES (96 aa).

Belongs to the GroES chaperonin family. As to quaternary structure, heptamer of 7 subunits arranged in a ring. Interacts with the chaperonin GroEL.

It is found in the cytoplasm. In terms of biological role, together with the chaperonin GroEL, plays an essential role in assisting protein folding. The GroEL-GroES system forms a nano-cage that allows encapsulation of the non-native substrate proteins and provides a physical environment optimized to promote and accelerate protein folding. GroES binds to the apical surface of the GroEL ring, thereby capping the opening of the GroEL channel. The protein is Co-chaperonin GroES of Shewanella pealeana (strain ATCC 700345 / ANG-SQ1).